The sequence spans 314 residues: 4-hydroxy-3-methylbut-2-enyl diphosphate reductase (314 aa).

Cysteine 12 serves as a coordination point for [4Fe-4S] cluster. The (2E)-4-hydroxy-3-methylbut-2-enyl diphosphate site is built by histidine 41 and histidine 74. Dimethylallyl diphosphate is bound by residues histidine 41 and histidine 74. Positions 41 and 74 each coordinate isopentenyl diphosphate. Position 96 (cysteine 96) interacts with [4Fe-4S] cluster. Histidine 124 provides a ligand contact to (2E)-4-hydroxy-3-methylbut-2-enyl diphosphate. Histidine 124 contributes to the dimethylallyl diphosphate binding site. Histidine 124 serves as a coordination point for isopentenyl diphosphate. Glutamate 126 serves as the catalytic Proton donor. A (2E)-4-hydroxy-3-methylbut-2-enyl diphosphate-binding site is contributed by threonine 167. Cysteine 197 serves as a coordination point for [4Fe-4S] cluster. Residues serine 225, serine 226, asparagine 227, and serine 269 each contribute to the (2E)-4-hydroxy-3-methylbut-2-enyl diphosphate site. Dimethylallyl diphosphate-binding residues include serine 225, serine 226, asparagine 227, and serine 269. Isopentenyl diphosphate-binding residues include serine 225, serine 226, asparagine 227, and serine 269.

This sequence belongs to the IspH family. The cofactor is [4Fe-4S] cluster.

It catalyses the reaction isopentenyl diphosphate + 2 oxidized [2Fe-2S]-[ferredoxin] + H2O = (2E)-4-hydroxy-3-methylbut-2-enyl diphosphate + 2 reduced [2Fe-2S]-[ferredoxin] + 2 H(+). It carries out the reaction dimethylallyl diphosphate + 2 oxidized [2Fe-2S]-[ferredoxin] + H2O = (2E)-4-hydroxy-3-methylbut-2-enyl diphosphate + 2 reduced [2Fe-2S]-[ferredoxin] + 2 H(+). Its pathway is isoprenoid biosynthesis; dimethylallyl diphosphate biosynthesis; dimethylallyl diphosphate from (2E)-4-hydroxy-3-methylbutenyl diphosphate: step 1/1. It participates in isoprenoid biosynthesis; isopentenyl diphosphate biosynthesis via DXP pathway; isopentenyl diphosphate from 1-deoxy-D-xylulose 5-phosphate: step 6/6. Functionally, catalyzes the conversion of 1-hydroxy-2-methyl-2-(E)-butenyl 4-diphosphate (HMBPP) into a mixture of isopentenyl diphosphate (IPP) and dimethylallyl diphosphate (DMAPP). Acts in the terminal step of the DOXP/MEP pathway for isoprenoid precursor biosynthesis. The sequence is that of 4-hydroxy-3-methylbut-2-enyl diphosphate reductase from Actinobacillus pleuropneumoniae serotype 7 (strain AP76).